The following is a 226-amino-acid chain: Ribonuclease 3 (226 aa).

The 123-residue stretch at 6 to 128 (INKLQRKLGY…LIGGVFLDSD (123 aa)) folds into the RNase III domain. Glutamate 41 contacts Mg(2+). The active site involves aspartate 45. Residues aspartate 114 and glutamate 117 each contribute to the Mg(2+) site. Glutamate 117 is a catalytic residue. Residues 155–225 (DPKTRLQEYL…AEQALIKLGL (71 aa)) form the DRBM domain.

It belongs to the ribonuclease III family. Homodimer. Requires Mg(2+) as cofactor.

It localises to the cytoplasm. The enzyme catalyses Endonucleolytic cleavage to 5'-phosphomonoester.. Digests double-stranded RNA. Involved in the processing of primary rRNA transcript to yield the immediate precursors to the large and small rRNAs (23S and 16S). Processes some mRNAs, and tRNAs when they are encoded in the rRNA operon. Processes pre-crRNA and tracrRNA of type II CRISPR loci if present in the organism. In Pantoea ananatis (strain LMG 20103), this protein is Ribonuclease 3 (rnc).